The chain runs to 394 residues: Elongation factor Tu (394 aa).

The 195-residue stretch at 10-204 folds into the tr-type G domain; sequence KPHVNVGTIG…HLDTYIPEPE (195 aa). Positions 19–26 are G1; that stretch reads GHVDHGKT. 19 to 26 is a binding site for GTP; it reads GHVDHGKT. T26 contacts Mg(2+). Residues 60–64 form a G2 region; it reads GITIN. A G3 region spans residues 81–84; it reads DCPG. Residues 81 to 85 and 136 to 139 each bind GTP; these read DCPGH and NKCD. The G4 stretch occupies residues 136–139; it reads NKCD. The G5 stretch occupies residues 174 to 176; sequence SAL.

This sequence belongs to the TRAFAC class translation factor GTPase superfamily. Classic translation factor GTPase family. EF-Tu/EF-1A subfamily. As to quaternary structure, monomer.

It localises to the cytoplasm. It carries out the reaction GTP + H2O = GDP + phosphate + H(+). Functionally, GTP hydrolase that promotes the GTP-dependent binding of aminoacyl-tRNA to the A-site of ribosomes during protein biosynthesis. This chain is Elongation factor Tu, found in Aeromonas salmonicida (strain A449).